The sequence spans 804 residues: Leucine--tRNA ligase (804 aa).

Residues 40–51 (PYPSGQGLHVGH) carry the 'HIGH' region motif. Positions 576 to 580 (KMSKS) match the 'KMSKS' region motif. Lys-579 serves as a coordination point for ATP.

Belongs to the class-I aminoacyl-tRNA synthetase family.

Its subcellular location is the cytoplasm. The catalysed reaction is tRNA(Leu) + L-leucine + ATP = L-leucyl-tRNA(Leu) + AMP + diphosphate. This chain is Leucine--tRNA ligase, found in Enterococcus faecalis (strain ATCC 700802 / V583).